The following is a 338-amino-acid chain: Large ribosomal subunit protein uL3 (338 aa).

Positions 230-258 (HRKGHRRTGTIGPQAPAVMFTQPRPGQMG) are disordered.

The protein belongs to the universal ribosomal protein uL3 family. Part of the 50S ribosomal subunit. Forms a cluster with proteins L14 and L24e.

In terms of biological role, one of the primary rRNA binding proteins, it binds directly near the 3'-end of the 23S rRNA, where it nucleates assembly of the 50S subunit. The polypeptide is Large ribosomal subunit protein uL3 (Pyrobaculum aerophilum (strain ATCC 51768 / DSM 7523 / JCM 9630 / CIP 104966 / NBRC 100827 / IM2)).